The chain runs to 282 residues: Acetyl-coenzyme A carboxylase carboxyl transferase subunit beta (282 aa).

Residues 25–282 enclose the CoA carboxyltransferase N-terminal domain; sequence LWTKCVSCGE…SSILTMLYRP (258 aa). Positions 29, 32, 48, and 51 each coordinate Zn(2+). The segment at 29 to 51 adopts a C4-type zinc-finger fold; the sequence is CVSCGETIYTKDIENNLNVCPKC.

Belongs to the AccD/PCCB family. As to quaternary structure, acetyl-CoA carboxylase is a heterohexamer composed of biotin carboxyl carrier protein (AccB), biotin carboxylase (AccC) and two subunits each of ACCase subunit alpha (AccA) and ACCase subunit beta (AccD). Zn(2+) is required as a cofactor.

It is found in the cytoplasm. It carries out the reaction N(6)-carboxybiotinyl-L-lysyl-[protein] + acetyl-CoA = N(6)-biotinyl-L-lysyl-[protein] + malonyl-CoA. Its pathway is lipid metabolism; malonyl-CoA biosynthesis; malonyl-CoA from acetyl-CoA: step 1/1. Its function is as follows. Component of the acetyl coenzyme A carboxylase (ACC) complex. Biotin carboxylase (BC) catalyzes the carboxylation of biotin on its carrier protein (BCCP) and then the CO(2) group is transferred by the transcarboxylase to acetyl-CoA to form malonyl-CoA. This chain is Acetyl-coenzyme A carboxylase carboxyl transferase subunit beta, found in Citrifermentans bemidjiense (strain ATCC BAA-1014 / DSM 16622 / JCM 12645 / Bem) (Geobacter bemidjiensis).